A 261-amino-acid chain; its full sequence is MLITISPAKTLDFESPLATTQFTQPELLKYSQQLITECRKLSSSDIASLMKISDKLAGLNAARFGEWQPDFTPDNARQAILAFKGDVYTGMQAAELFTDDDFQFAQQHLRILSGLYGVLRPLDLMQPYRLEMGIKLNNKKGSDLYQFWGNIITETLNNALEAQGDNILVNLASDEYFKSVNPKKLNAEIIKPVFLDEKNGKYKVISFYAKKARGLMSRFIIQERLSDKAQLKEFNLEGYQFNAAESEGNTLVFKRAEHLAK.

The protein belongs to the UPF0246 family.

This is UPF0246 protein PMI0005 from Proteus mirabilis (strain HI4320).